We begin with the raw amino-acid sequence, 380 residues long: tRNA (guanine(26)-N(2))-dimethyltransferase (380 aa).

In terms of domain architecture, Trm1 methyltransferase spans 2–374 (ITVNEGSVTI…AGIGEIEEVL (373 aa)). Residues arginine 35, arginine 65, aspartate 83, aspartate 109, and alanine 110 each coordinate S-adenosyl-L-methionine. Residues cysteine 242, cysteine 245, cysteine 261, and cysteine 264 each contribute to the Zn(2+) site.

This sequence belongs to the class I-like SAM-binding methyltransferase superfamily. Trm1 family.

The catalysed reaction is guanosine(26) in tRNA + 2 S-adenosyl-L-methionine = N(2)-dimethylguanosine(26) in tRNA + 2 S-adenosyl-L-homocysteine + 2 H(+). Dimethylates a single guanine residue at position 26 of a number of tRNAs using S-adenosyl-L-methionine as donor of the methyl groups. This is tRNA (guanine(26)-N(2))-dimethyltransferase from Methanothermobacter thermautotrophicus (strain ATCC 29096 / DSM 1053 / JCM 10044 / NBRC 100330 / Delta H) (Methanobacterium thermoautotrophicum).